Consider the following 156-residue polypeptide: Movement protein P17 (156 aa).

A homodimerization region spans residues 38–54 (AEDAEEEAIAAQEELEF). Disordered stretches follow at residues 55-80 (PEDE…EVSP) and 106-156 (ASYF…IKRG). Residues 57–156 (DEAQARHSCL…RAAPKLIKRG (100 aa)) are RNA-binding. Ser-71, Ser-79, Ser-137, and Ser-140 each carry phosphoserine. A compositionally biased stretch (basic residues) spans 144-156 (KLRRAAPKLIKRG).

Belongs to the polerovirus movement protein family. Homodimer. In terms of processing, expressed as a nonphosphorylated 20kDa form and a phosphorylated 22kDa form. Phosphorylated by a host PKC-related kinase. Serine phosphorylation is required for plamodesma targeting.

It localises to the host cell junction. The protein localises to the host plasmodesma. Its subcellular location is the host chloroplast envelope. The protein resides in the host Golgi apparatus. It is found in the host mitochondrion outer membrane. Functionally, together with movement protein P3a, facilitates long-distance movement of virions in host. Transports viral genome to neighboring plant cells directly through plasmosdesmata, without any budding. The movement protein allows efficient cell to cell propagation, by bypassing the host cell wall barrier. Binds ssRNA. The polypeptide is Movement protein P17 (Potato leafroll virus (strain Potato/Canada/Rowhani/1979) (PLrV)).